The sequence spans 255 residues: Aliphatic sulfonates import ATP-binding protein SsuB (255 aa).

Positions 12 to 233 constitute an ABC transporter domain; that stretch reads LLLNAVSKHY…RLGSVRLAEL (222 aa). 44-51 serves as a coordination point for ATP; sequence GRSGGGKS.

It belongs to the ABC transporter superfamily. Aliphatic sulfonates importer (TC 3.A.1.17.2) family. The complex is composed of two ATP-binding proteins (SsuB), two transmembrane proteins (SsuC) and a solute-binding protein (SsuA).

Its subcellular location is the cell inner membrane. The catalysed reaction is ATP + H2O + aliphatic sulfonate-[sulfonate-binding protein]Side 1 = ADP + phosphate + aliphatic sulfonateSide 2 + [sulfonate-binding protein]Side 1.. Functionally, part of the ABC transporter complex SsuABC involved in aliphatic sulfonates import. Responsible for energy coupling to the transport system. The sequence is that of Aliphatic sulfonates import ATP-binding protein SsuB from Shigella flexneri serotype 5b (strain 8401).